A 132-amino-acid chain; its full sequence is MRSLVWAVIATLIVLTPFSEATSSIASNNEEFKQNVRVASSSLEQKGTIEDSVITRKLQSDSVKKGDSTGLEERGGLHVPTIHDNKIVQGFYKVMRYLRQKLGIDFLLTRLRYGKNGSHQPNMGYSRVDHYH.

The N-terminal stretch at 1-21 (MRSLVWAVIATLIVLTPFSEA) is a signal peptide. Residues 56–74 (RKLQSDSVKKGDSTGLEER) carry the RxLR-dEER motif. N-linked (GlcNAc...) asparagine glycosylation is present at N116.

The protein belongs to the RxLR effector family.

The protein localises to the secreted. Its subcellular location is the host Golgi apparatus. Functionally, secreted effector that does not suppress pattern-triggered immunity (PTI) in plant host. The sequence is that of Secreted RxLR effector protein RXLR-C22 from Plasmopara halstedii (Downy mildew of sunflower).